The following is a 435-amino-acid chain: Trigger factor (435 aa).

A PPIase FKBP-type domain is found at 163 to 248 (GDFVTFDFKG…VKEIKVKELP (86 aa)).

The protein belongs to the FKBP-type PPIase family. Tig subfamily.

The protein resides in the cytoplasm. The catalysed reaction is [protein]-peptidylproline (omega=180) = [protein]-peptidylproline (omega=0). Functionally, involved in protein export. Acts as a chaperone by maintaining the newly synthesized protein in an open conformation. Functions as a peptidyl-prolyl cis-trans isomerase. The sequence is that of Trigger factor from Geobacter sp. (strain M21).